Consider the following 358-residue polypeptide: Guanidino acid hydrolase, mitochondrial (358 aa).

Residues 1 to 36 constitute a mitochondrion transit peptide; it reads MLRLLRSSWARGLGSGVATWRPSAGLFRPGCPGIRQ. The segment at 31 to 56 is disordered; it reads CPGIRQASGASDTPHHQSPSSESPVQ. Positions 46 to 56 are enriched in low complexity; sequence HQSPSSESPVQ. Mn(2+)-binding residues include Q168 and H193. At K199 the chain carries N6-acetyllysine. K223 is subject to N6-acetyllysine; alternate. K223 carries the post-translational modification N6-succinyllysine; alternate. D284 lines the Mn(2+) pocket.

Belongs to the arginase family. Agmatinase subfamily. Mn(2+) serves as cofactor. As to expression, detected only in liver.

Its subcellular location is the mitochondrion. The catalysed reaction is 3-guanidinopropanoate + H2O = urea + beta-alanine. It catalyses the reaction 4-guanidinobutanoate + H2O = urea + 4-aminobutanoate. It carries out the reaction taurocyamine + H2O = urea + taurine. The enzyme catalyses L-arginine + H2O = urea + L-ornithine. The protein operates within nitrogen metabolism; urea cycle; L-ornithine and urea from L-arginine: step 1/1. In terms of biological role, hydrolyzes linear guanidino acids to form urea and the corresponding amines. Displays specificity for substrates having a negatively charged head group and short chains including taurocyamine, guanidino propanoic and butanoic acids. May protect cells by detoxifying potentially harmful amounts of guanidino acids. Metabolizes L-arginine with low efficiency. The polypeptide is Guanidino acid hydrolase, mitochondrial (Agmat) (Mus musculus (Mouse)).